The sequence spans 311 residues: Homoserine kinase (311 aa).

Residue Pro96–Ala106 coordinates ATP.

Belongs to the GHMP kinase family. Homoserine kinase subfamily.

It localises to the cytoplasm. The enzyme catalyses L-homoserine + ATP = O-phospho-L-homoserine + ADP + H(+). It participates in amino-acid biosynthesis; L-threonine biosynthesis; L-threonine from L-aspartate: step 4/5. In terms of biological role, catalyzes the ATP-dependent phosphorylation of L-homoserine to L-homoserine phosphate. In Natranaerobius thermophilus (strain ATCC BAA-1301 / DSM 18059 / JW/NM-WN-LF), this protein is Homoserine kinase.